Here is a 215-residue protein sequence, read N- to C-terminus: Adenylate kinase (215 aa).

10 to 15 (GAGKGT) contacts ATP. Residues 30-59 (STGDMLRAAIKAGTPLGLEAKKIIDEGGLV) form an NMP region. AMP contacts are provided by residues Thr31, Arg36, 57–59 (GLV), 85–88 (GFPR), and Gln92. An LID region spans residues 122–159 (GRRVHLASGRTYHVTYNPPKVEGKDDVTGEDLIQRDDD). ATP is bound by residues Arg123 and 132–133 (TY). Residues Arg156 and Arg167 each contribute to the AMP site. Gln200 contacts ATP.

Belongs to the adenylate kinase family. Monomer.

It is found in the cytoplasm. The catalysed reaction is AMP + ATP = 2 ADP. It functions in the pathway purine metabolism; AMP biosynthesis via salvage pathway; AMP from ADP: step 1/1. Catalyzes the reversible transfer of the terminal phosphate group between ATP and AMP. Plays an important role in cellular energy homeostasis and in adenine nucleotide metabolism. This is Adenylate kinase from Neisseria meningitidis serogroup B (strain ATCC BAA-335 / MC58).